The primary structure comprises 193 residues: Crossover junction endodeoxyribonuclease RuvC (193 aa).

Residues aspartate 7, glutamate 68, and aspartate 141 contribute to the active site. The Mg(2+) site is built by aspartate 7, glutamate 68, and aspartate 141.

This sequence belongs to the RuvC family. Homodimer which binds Holliday junction (HJ) DNA. The HJ becomes 2-fold symmetrical on binding to RuvC with unstacked arms; it has a different conformation from HJ DNA in complex with RuvA. In the full resolvosome a probable DNA-RuvA(4)-RuvB(12)-RuvC(2) complex forms which resolves the HJ. The cofactor is Mg(2+).

Its subcellular location is the cytoplasm. It carries out the reaction Endonucleolytic cleavage at a junction such as a reciprocal single-stranded crossover between two homologous DNA duplexes (Holliday junction).. In terms of biological role, the RuvA-RuvB-RuvC complex processes Holliday junction (HJ) DNA during genetic recombination and DNA repair. Endonuclease that resolves HJ intermediates. Cleaves cruciform DNA by making single-stranded nicks across the HJ at symmetrical positions within the homologous arms, yielding a 5'-phosphate and a 3'-hydroxyl group; requires a central core of homology in the junction. The consensus cleavage sequence is 5'-(A/T)TT(C/G)-3'. Cleavage occurs on the 3'-side of the TT dinucleotide at the point of strand exchange. HJ branch migration catalyzed by RuvA-RuvB allows RuvC to scan DNA until it finds its consensus sequence, where it cleaves and resolves the cruciform DNA. The polypeptide is Crossover junction endodeoxyribonuclease RuvC (Renibacterium salmoninarum (strain ATCC 33209 / DSM 20767 / JCM 11484 / NBRC 15589 / NCIMB 2235)).